A 401-amino-acid polypeptide reads, in one-letter code: Imidazolonepropionase (401 aa).

Residues H66 and H68 each contribute to the Fe(3+) site. Residues H66 and H68 each contribute to the Zn(2+) site. Positions 75, 138, and 171 each coordinate 4-imidazolone-5-propanoate. Y138 lines the N-formimidoyl-L-glutamate pocket. A Fe(3+)-binding site is contributed by H236. H236 lines the Zn(2+) pocket. Residue Q239 coordinates 4-imidazolone-5-propanoate. Fe(3+) is bound at residue D311. D311 is a Zn(2+) binding site. 2 residues coordinate N-formimidoyl-L-glutamate: N313 and G315. Residue T316 participates in 4-imidazolone-5-propanoate binding.

It belongs to the metallo-dependent hydrolases superfamily. HutI family. It depends on Zn(2+) as a cofactor. Fe(3+) serves as cofactor.

It is found in the cytoplasm. The enzyme catalyses 4-imidazolone-5-propanoate + H2O = N-formimidoyl-L-glutamate. It participates in amino-acid degradation; L-histidine degradation into L-glutamate; N-formimidoyl-L-glutamate from L-histidine: step 3/3. Its function is as follows. Catalyzes the hydrolytic cleavage of the carbon-nitrogen bond in imidazolone-5-propanoate to yield N-formimidoyl-L-glutamate. It is the third step in the universal histidine degradation pathway. The chain is Imidazolonepropionase from Pseudomonas putida (strain ATCC 700007 / DSM 6899 / JCM 31910 / BCRC 17059 / LMG 24140 / F1).